The sequence spans 223 residues: Ubiquitin-conjugating enzyme E2 S (223 aa).

N-acetylmethionine is present on Met1. Residues 11–157 (HIIRLVYKEV…ARLLTEIHGG (147 aa)) enclose the UBC core domain. Catalysis depends on Cys95, which acts as the Glycyl thioester intermediate. The interval 155 to 223 (HGGAGGPSGG…TDKKRALRRL (69 aa)) is disordered. The span at 169-195 (GRATASGAAASTADPTAPGGPAGAEGP) shows a compositional bias: low complexity. A Phosphoserine modification is found at Ser174. The segment covering 209 to 223 (AAKKKTDKKRALRRL) has biased composition (basic residues).

It belongs to the ubiquitin-conjugating enzyme family. As to quaternary structure, component of the APC/C complex, composed of at least 14 distinct subunits that assemble into a complex of at least 19 chains with a combined molecular mass of around 1.2 MDa. Within this complex, directly interacts with ANAPC2 and ANAPC4. Interacts with CDC20, FZR1/CDH1 and VHL. In terms of processing, autoubiquitinated by the APC/C complex during G1, leading to its degradation by the proteasome.

The enzyme catalyses S-ubiquitinyl-[E1 ubiquitin-activating enzyme]-L-cysteine + [E2 ubiquitin-conjugating enzyme]-L-cysteine = [E1 ubiquitin-activating enzyme]-L-cysteine + S-ubiquitinyl-[E2 ubiquitin-conjugating enzyme]-L-cysteine.. Its pathway is protein modification; protein ubiquitination. Functionally, accepts ubiquitin from the E1 complex and catalyzes its covalent attachment to other proteins. Catalyzes 'Lys-11'-linked polyubiquitination. Acts as an essential factor of the anaphase promoting complex/cyclosome (APC/C), a cell cycle-regulated ubiquitin ligase that controls progression through mitosis. Acts by specifically elongating 'Lys-11'-linked polyubiquitin chains initiated by the E2 enzyme UBE2C/UBCH10 on APC/C substrates, enhancing the degradation of APC/C substrates by the proteasome and promoting mitotic exit. Also acts by elongating ubiquitin chains initiated by the E2 enzyme UBE2D1/UBCH5 in vitro; it is however unclear whether UBE2D1/UBCH5 acts as an E2 enzyme for the APC/C in vivo. Also involved in ubiquitination and subsequent degradation of VHL, resulting in an accumulation of HIF1A. In vitro able to promote polyubiquitination using all 7 ubiquitin Lys residues, except 'Lys-48'-linked polyubiquitination. The polypeptide is Ubiquitin-conjugating enzyme E2 S (UBE2S) (Bos taurus (Bovine)).